The sequence spans 622 residues: 1-deoxy-D-xylulose-5-phosphate synthase (622 aa).

Residues His-80 and 121 to 123 (GHS) contribute to the thiamine diphosphate site. A Mg(2+)-binding site is contributed by Asp-152. Thiamine diphosphate contacts are provided by residues 153-154 (GA), Asn-181, Tyr-288, and Glu-370. Asn-181 provides a ligand contact to Mg(2+).

It belongs to the transketolase family. DXPS subfamily. In terms of assembly, homodimer. Mg(2+) serves as cofactor. Requires thiamine diphosphate as cofactor.

It carries out the reaction D-glyceraldehyde 3-phosphate + pyruvate + H(+) = 1-deoxy-D-xylulose 5-phosphate + CO2. It functions in the pathway metabolic intermediate biosynthesis; 1-deoxy-D-xylulose 5-phosphate biosynthesis; 1-deoxy-D-xylulose 5-phosphate from D-glyceraldehyde 3-phosphate and pyruvate: step 1/1. Its function is as follows. Catalyzes the acyloin condensation reaction between C atoms 2 and 3 of pyruvate and glyceraldehyde 3-phosphate to yield 1-deoxy-D-xylulose-5-phosphate (DXP). In Shewanella sp. (strain MR-4), this protein is 1-deoxy-D-xylulose-5-phosphate synthase.